Here is a 357-residue protein sequence, read N- to C-terminus: tRNA-specific 2-thiouridylase MnmA (357 aa).

ATP-binding positions include 6 to 13 (AMSGGVDS) and L32. C101 (nucleophile) is an active-site residue. C101 and C193 are disulfide-bonded. Residue G125 coordinates ATP. The interval 143-145 (KDQ) is interaction with tRNA. The Cysteine persulfide intermediate role is filled by C193.

This sequence belongs to the MnmA/TRMU family.

Its subcellular location is the cytoplasm. It carries out the reaction S-sulfanyl-L-cysteinyl-[protein] + uridine(34) in tRNA + AH2 + ATP = 2-thiouridine(34) in tRNA + L-cysteinyl-[protein] + A + AMP + diphosphate + H(+). Catalyzes the 2-thiolation of uridine at the wobble position (U34) of tRNA, leading to the formation of s(2)U34. The polypeptide is tRNA-specific 2-thiouridylase MnmA (Mycolicibacterium vanbaalenii (strain DSM 7251 / JCM 13017 / BCRC 16820 / KCTC 9966 / NRRL B-24157 / PYR-1) (Mycobacterium vanbaalenii)).